The following is an 837-amino-acid chain: Outer membrane usher protein HifC (837 aa).

The first 26 residues, 1 to 26, serve as a signal peptide directing secretion; it reads MKTKIFPLNKIAFACSLLLANPLAWA. An intrachain disulfide couples C813 to C833.

The protein belongs to the fimbrial export usher family.

It is found in the cell outer membrane. Its function is as follows. Essential for piliation. In Haemophilus influenzae, this protein is Outer membrane usher protein HifC (hifC).